The primary structure comprises 225 residues: Fibronectin type III domain-containing protein 10 (225 aa).

A signal peptide spans 1–19 (MRAPPLLLLLAACAPPSGA). The Extracellular portion of the chain corresponds to 20–181 (AVDPTPPGWE…FTAEPAAMQE (162 aa)). A Fibronectin type-III domain is found at 72–167 (LASAGGSLRA…ELAAAPPELA (96 aa)). 2 N-linked (GlcNAc...) asparagine glycosylation sites follow: Asn-86 and Asn-109. Residues 182 to 202 (IVVAMTAVGGSICVMLVVICL) traverse the membrane as a helical segment. Residues 203–225 (LVAYITENLMHPTFRRPSLRRQP) are Cytoplasmic-facing.

Its subcellular location is the membrane. In Rattus norvegicus (Rat), this protein is Fibronectin type III domain-containing protein 10 (Fndc10).